We begin with the raw amino-acid sequence, 406 residues long: Pyruvate dehydrogenase E1 component subunit beta-2, chloroplastic (406 aa).

A chloroplast-targeting transit peptide spans 1–44; the sequence is MSSIIHGAGAATTTLSTFNSVDSKKLFVAPSRTNLSVRSQRYIV. Glutamate 142 serves as a coordination point for thiamine diphosphate. K(+)-binding residues include valine 195, alanine 243, isoleucine 244, and asparagine 248.

As to quaternary structure, tetramer of 2 alpha and 2 beta subunits. Thiamine diphosphate is required as a cofactor.

It localises to the plastid. The protein localises to the chloroplast. It carries out the reaction N(6)-[(R)-lipoyl]-L-lysyl-[protein] + pyruvate + H(+) = N(6)-[(R)-S(8)-acetyldihydrolipoyl]-L-lysyl-[protein] + CO2. In terms of biological role, the pyruvate dehydrogenase complex catalyzes the overall conversion of pyruvate to acetyl-CoA and CO(2). It contains multiple copies of three enzymatic components: pyruvate dehydrogenase (E1), dihydrolipoamide acetyltransferase (E2) and lipoamide dehydrogenase (E3). This Arabidopsis thaliana (Mouse-ear cress) protein is Pyruvate dehydrogenase E1 component subunit beta-2, chloroplastic (PDH-E1 BETA).